The sequence spans 231 residues: Ion-translocating oxidoreductase complex subunit E (231 aa).

6 helical membrane-spanning segments follow: residues 18–38, 39–59, 69–89, 93–113, 127–147, and 182–202; these read GLVQ…LTNA, LGLG…VSLV, IPVF…FINA, GLYL…VIIG, STFD…VLGA, and TFLL…LIAL.

The protein belongs to the NqrDE/RnfAE family. As to quaternary structure, the complex is composed of six subunits: RnfA, RnfB, RnfC, RnfD, RnfE and RnfG.

It localises to the cell inner membrane. Part of a membrane-bound complex that couples electron transfer with translocation of ions across the membrane. The polypeptide is Ion-translocating oxidoreductase complex subunit E (Shewanella piezotolerans (strain WP3 / JCM 13877)).